The following is a 514-amino-acid chain: Peptide chain release factor 3 (514 aa).

The tr-type G domain maps to 8–268 (KKRRTFAIIS…TFLKFAPEPH (261 aa)). GTP-binding positions include 17 to 24 (SHPDAGKT), 85 to 89 (DTPGH), and 139 to 142 (NKLD).

It belongs to the TRAFAC class translation factor GTPase superfamily. Classic translation factor GTPase family. PrfC subfamily.

The protein localises to the cytoplasm. Increases the formation of ribosomal termination complexes and stimulates activities of RF-1 and RF-2. It binds guanine nucleotides and has strong preference for UGA stop codons. It may interact directly with the ribosome. The stimulation of RF-1 and RF-2 is significantly reduced by GTP and GDP, but not by GMP. This is Peptide chain release factor 3 from Streptococcus pneumoniae (strain Hungary19A-6).